The sequence spans 257 residues: UPF0246 protein lpg1366 (257 aa).

The protein belongs to the UPF0246 family.

This chain is UPF0246 protein lpg1366, found in Legionella pneumophila subsp. pneumophila (strain Philadelphia 1 / ATCC 33152 / DSM 7513).